The sequence spans 132 residues: Small ribosomal subunit protein eS17B (132 aa).

Phosphoserine is present on S43.

It belongs to the eukaryotic ribosomal protein eS17 family. In terms of assembly, component of the small ribosomal subunit (SSU). Mature yeast ribosomes consist of a small (40S) and a large (60S) subunit. The 40S small subunit contains 1 molecule of ribosomal RNA (18S rRNA) and at least 33 different proteins. The large 60S subunit contains 3 rRNA molecules (25S, 5.8S and 5S rRNA) and at least 46 different proteins.

The protein localises to the cytoplasm. In terms of biological role, component of the ribosome, a large ribonucleoprotein complex responsible for the synthesis of proteins in the cell. The small ribosomal subunit (SSU) binds messenger RNAs (mRNAs) and translates the encoded message by selecting cognate aminoacyl-transfer RNA (tRNA) molecules. The large subunit (LSU) contains the ribosomal catalytic site termed the peptidyl transferase center (PTC), which catalyzes the formation of peptide bonds, thereby polymerizing the amino acids delivered by tRNAs into a polypeptide chain. The nascent polypeptides leave the ribosome through a tunnel in the LSU and interact with protein factors that function in enzymatic processing, targeting, and the membrane insertion of nascent chains at the exit of the ribosomal tunnel. The protein is Small ribosomal subunit protein eS17B (rps1702) of Schizosaccharomyces pombe (strain 972 / ATCC 24843) (Fission yeast).